The primary structure comprises 627 residues: Plastin-3 (627 aa).

2 EF-hand domains span residues 8-43 (EELEELREAFGKVDLNGNGFICDHELHDLFKEANLP) and 48-83 (KVREIIQKLMEEGDKNKDNMISFDEFVSIFQELKSG). Positions 21, 23, 25, 32, 61, 63, 65, 67, and 72 each coordinate Ca(2+). Actin-binding regions lie at residues 105 to 378 (TSEL…ALTK) and 379 to 624 (PENQ…GRGM). 4 Calponin-homology (CH) domains span residues 119–235 (EEER…KIGL), 263–374 (LSPE…NKYP), 393–503 (TREE…RRYT), and 515–624 (KVND…GRGM).

It is found in the cytoplasm. Its function is as follows. Actin-bundling protein. This Danio rerio (Zebrafish) protein is Plastin-3 (pls3).